Here is a 257-residue protein sequence, read N- to C-terminus: Putative transcription factor R430 (257 aa).

2 disordered regions span residues 1–35 and 58–77; these read MEKF…DNNS and SLKS…PNKS. The segment covering 7–25 has biased composition (low complexity); it reads TDNTTDNTTDNTTDNTTDN. A compositionally biased stretch (basic and acidic residues) spans 26-35; it reads TTDKLTDNNS.

This sequence belongs to the nucleo-cytoplasmic large DNA viruses (NCLDVs) VLTF-3 family.

Putative transcription factor. The sequence is that of Putative transcription factor R430 from Acanthamoeba polyphaga (Amoeba).